The sequence spans 263 residues: Purine nucleoside phosphorylase SERP0752 (263 aa).

Zn(2+)-binding residues include His-79, Cys-124, and His-141.

Belongs to the purine nucleoside phosphorylase YfiH/LACC1 family. In terms of assembly, homodimer. Requires Cu(2+) as cofactor. Zn(2+) serves as cofactor.

The enzyme catalyses adenosine + phosphate = alpha-D-ribose 1-phosphate + adenine. It carries out the reaction S-methyl-5'-thioadenosine + phosphate = 5-(methylsulfanyl)-alpha-D-ribose 1-phosphate + adenine. The catalysed reaction is inosine + phosphate = alpha-D-ribose 1-phosphate + hypoxanthine. It catalyses the reaction adenosine + H2O + H(+) = inosine + NH4(+). Purine nucleoside enzyme that catalyzes the phosphorolysis of adenosine and inosine nucleosides, yielding D-ribose 1-phosphate and the respective free bases, adenine and hypoxanthine. Also catalyzes the phosphorolysis of S-methyl-5'-thioadenosine into adenine and S-methyl-5-thio-alpha-D-ribose 1-phosphate. Also has adenosine deaminase activity. This chain is Purine nucleoside phosphorylase SERP0752, found in Staphylococcus epidermidis (strain ATCC 35984 / DSM 28319 / BCRC 17069 / CCUG 31568 / BM 3577 / RP62A).